Here is a 235-residue protein sequence, read N- to C-terminus: Thiamine import ATP-binding protein ThiQ (235 aa).

The ABC transporter domain occupies 2 to 230 (LKLIDITWLY…QASASALLGI (229 aa)). An ATP-binding site is contributed by 32 to 39 (GPSGAGKS).

This sequence belongs to the ABC transporter superfamily. Thiamine importer (TC 3.A.1.19.1) family. In terms of assembly, the complex is composed of two ATP-binding proteins (ThiQ), two transmembrane proteins (ThiP) and a solute-binding protein (ThiB).

The protein localises to the cell inner membrane. The enzyme catalyses thiamine(out) + ATP + H2O = thiamine(in) + ADP + phosphate + H(+). Part of the ABC transporter complex ThiBPQ involved in thiamine import. Responsible for energy coupling to the transport system. The protein is Thiamine import ATP-binding protein ThiQ of Salmonella paratyphi A (strain ATCC 9150 / SARB42).